Here is a 248-residue protein sequence, read N- to C-terminus: Proteasome subunit alpha type-5 (248 aa).

It belongs to the peptidase T1A family. As to quaternary structure, the 26S proteasome consists of a 20S proteasome core and two 19S regulatory subunits. The 20S proteasome core is composed of 28 subunits that are arranged in four stacked rings, resulting in a barrel-shaped structure. The two end rings are each formed by seven alpha subunits, and the two central rings are each formed by seven beta subunits. The catalytic chamber with the active sites is on the inside of the barrel.

It is found in the cytoplasm. The protein resides in the nucleus. In terms of biological role, the proteasome is a multicatalytic proteinase complex which is characterized by its ability to cleave peptides with Arg, Phe, Tyr, Leu, and Glu adjacent to the leaving group at neutral or slightly basic pH. The proteasome has an ATP-dependent proteolytic activity. In Caenorhabditis elegans, this protein is Proteasome subunit alpha type-5 (pas-5).